Here is a 496-residue protein sequence, read N- to C-terminus: Transcription termination/antitermination protein NusA (496 aa).

Residues 135–200 form the S1 motif domain; the sequence is GQIITGIVKK…RGAQLFISRS (66 aa). The 69-residue stretch at 302–370 folds into the KH domain; it reads CHTMDIAVDI…KNLNINENII (69 aa). 2 consecutive repeat copies span residues 364–414 and 440–490. The tract at residues 364 to 490 is 2 X 51 AA approximate repeats; sequence NINENIIKIL…LLIMTARNIC (127 aa).

Belongs to the NusA family. Monomer. Binds directly to the core enzyme of the DNA-dependent RNA polymerase and to nascent RNA.

It is found in the cytoplasm. In terms of biological role, participates in both transcription termination and antitermination. The protein is Transcription termination/antitermination protein NusA of Buchnera aphidicola subsp. Acyrthosiphon pisum (strain APS) (Acyrthosiphon pisum symbiotic bacterium).